The chain runs to 357 residues: Dihydroflavonol 4-reductase (357 aa).

2 residues coordinate NADP(+): Lys49 and Tyr168.

This sequence belongs to the NAD(P)-dependent epimerase/dehydratase family. Dihydroflavonol-4-reductase subfamily.

It carries out the reaction a (2R,3S,4S)-leucoanthocyanidin + NADP(+) = a (2R,3R)-dihydroflavonol + NADPH + H(+). The enzyme catalyses (2S)-flavan-4-ol + NADP(+) = (2S)-flavanone + NADPH + H(+). The protein operates within pigment biosynthesis; anthocyanin biosynthesis. Functionally, bifunctional enzyme involved in flavonoid metabolism. This Zea mays (Maize) protein is Dihydroflavonol 4-reductase (A1).